Consider the following 97-residue polypeptide: MSRKCELTGVGVLYGNNVSHSQRKTRRRFEPNLRSVKFTSDITAGEYRLSVNARCISSVEKAGGFDAYILKADDNVLSGNARAIKKKIIQTKTAKSL.

It belongs to the bacterial ribosomal protein bL28 family.

The chain is Large ribosomal subunit protein bL28 from Rickettsia rickettsii (strain Iowa).